The sequence spans 342 residues: Anthranilate phosphoribosyltransferase (342 aa).

5-phospho-alpha-D-ribose 1-diphosphate-binding positions include Gly83, 86 to 87 (GD), Thr91, 93 to 96 (NIST), 111 to 119 (KHGGRSVSS), and Ala123. Gly83 is a binding site for anthranilate. Ser95 provides a ligand contact to Mg(2+). Position 169 (Arg169) interacts with anthranilate. Mg(2+) is bound by residues Asp228 and Glu229.

Belongs to the anthranilate phosphoribosyltransferase family. As to quaternary structure, homodimer. Mg(2+) is required as a cofactor.

The enzyme catalyses N-(5-phospho-beta-D-ribosyl)anthranilate + diphosphate = 5-phospho-alpha-D-ribose 1-diphosphate + anthranilate. The protein operates within amino-acid biosynthesis; L-tryptophan biosynthesis; L-tryptophan from chorismate: step 2/5. Catalyzes the transfer of the phosphoribosyl group of 5-phosphorylribose-1-pyrophosphate (PRPP) to anthranilate to yield N-(5'-phosphoribosyl)-anthranilate (PRA). The chain is Anthranilate phosphoribosyltransferase from Neisseria gonorrhoeae (strain ATCC 700825 / FA 1090).